The sequence spans 357 residues: NADH-quinone oxidoreductase subunit H (357 aa).

8 consecutive transmembrane segments (helical) span residues 20 to 40, 92 to 112, 127 to 147, 165 to 185, 206 to 226, 254 to 274, 294 to 314, and 329 to 349; these read WLVL…ILCV, ILFV…WAVV, LLYV…AGWA, VSYE…SGSL, FLSW…ISAV, MAFA…SCMA, IPGW…FVWF, and LGWK…AIWM.

Belongs to the complex I subunit 1 family. In terms of assembly, NDH-1 is composed of 14 different subunits. Subunits NuoA, H, J, K, L, M, N constitute the membrane sector of the complex.

It localises to the cell inner membrane. It catalyses the reaction a quinone + NADH + 5 H(+)(in) = a quinol + NAD(+) + 4 H(+)(out). In terms of biological role, NDH-1 shuttles electrons from NADH, via FMN and iron-sulfur (Fe-S) centers, to quinones in the respiratory chain. The immediate electron acceptor for the enzyme in this species is believed to be ubiquinone. Couples the redox reaction to proton translocation (for every two electrons transferred, four hydrogen ions are translocated across the cytoplasmic membrane), and thus conserves the redox energy in a proton gradient. This subunit may bind ubiquinone. The sequence is that of NADH-quinone oxidoreductase subunit H from Bordetella petrii (strain ATCC BAA-461 / DSM 12804 / CCUG 43448).